A 122-amino-acid polypeptide reads, in one-letter code: Large ribosomal subunit protein uL14 (122 aa).

Belongs to the universal ribosomal protein uL14 family. As to quaternary structure, part of the 50S ribosomal subunit. Forms a cluster with proteins L3 and L19. In the 70S ribosome, L14 and L19 interact and together make contacts with the 16S rRNA in bridges B5 and B8.

In terms of biological role, binds to 23S rRNA. Forms part of two intersubunit bridges in the 70S ribosome. The chain is Large ribosomal subunit protein uL14 from Mycobacterium tuberculosis (strain ATCC 25177 / H37Ra).